Consider the following 99-residue polypeptide: Apolipoprotein C-III (99 aa).

A signal peptide spans Met-1–Ala-20. Met-63 bears the Methionine sulfoxide mark. Residues Arg-68 to Ser-99 form a lipid-binding region. The O-linked (GalNAc...) threonine glycan is linked to Thr-94.

Belongs to the apolipoprotein C3 family. The most abundant glycoforms are characterized by an O-linked disaccharide galactose linked to N-acetylgalactosamine (Gal-GalNAc), further modified with up to 3 sialic acid residues. Less abundant glycoforms are characterized by more complex and fucosylated glycan moieties. O-glycosylated on Thr-94 with a core 1 or possibly core 8 glycan.

It localises to the secreted. In terms of biological role, component of triglyceride-rich very low density lipoproteins (VLDL) and high density lipoproteins (HDL) in plasma. Plays a multifaceted role in triglyceride homeostasis. Intracellularly, promotes hepatic very low density lipoprotein 1 (VLDL1) assembly and secretion; extracellularly, attenuates hydrolysis and clearance of triglyceride-rich lipoproteins (TRLs). Impairs the lipolysis of TRLs by inhibiting lipoprotein lipase and the hepatic uptake of TRLs by remnant receptors. Formed of several curved helices connected via semiflexible hinges, so that it can wrap tightly around the curved micelle surface and easily adapt to the different diameters of its natural binding partners. The sequence is that of Apolipoprotein C-III (Apoc3) from Mus musculus (Mouse).